The chain runs to 178 residues: Ribosomal RNA small subunit methyltransferase G (178 aa).

Residues G54, L59, 105-106, and R120 contribute to the S-adenosyl-L-methionine site; that span reads LE.

It belongs to the methyltransferase superfamily. RNA methyltransferase RsmG family.

The protein localises to the cytoplasm. It catalyses the reaction guanosine(527) in 16S rRNA + S-adenosyl-L-methionine = N(7)-methylguanosine(527) in 16S rRNA + S-adenosyl-L-homocysteine. In terms of biological role, specifically methylates the N7 position of guanine in position 527 of 16S rRNA. The polypeptide is Ribosomal RNA small subunit methyltransferase G (Helicobacter acinonychis (strain Sheeba)).